We begin with the raw amino-acid sequence, 347 residues long: UDP-3-O-acylglucosamine N-acyltransferase (347 aa).

The active-site Proton acceptor is histidine 240.

Belongs to the transferase hexapeptide repeat family. LpxD subfamily. As to quaternary structure, homotrimer.

It carries out the reaction a UDP-3-O-[(3R)-3-hydroxyacyl]-alpha-D-glucosamine + a (3R)-hydroxyacyl-[ACP] = a UDP-2-N,3-O-bis[(3R)-3-hydroxyacyl]-alpha-D-glucosamine + holo-[ACP] + H(+). It functions in the pathway bacterial outer membrane biogenesis; LPS lipid A biosynthesis. In terms of biological role, catalyzes the N-acylation of UDP-3-O-acylglucosamine using 3-hydroxyacyl-ACP as the acyl donor. Is involved in the biosynthesis of lipid A, a phosphorylated glycolipid that anchors the lipopolysaccharide to the outer membrane of the cell. The protein is UDP-3-O-acylglucosamine N-acyltransferase of Hydrogenovibrio crunogenus (strain DSM 25203 / XCL-2) (Thiomicrospira crunogena).